We begin with the raw amino-acid sequence, 233 residues long: MKFDVLTLFPELFNTVMGESIIGRAQKNRLVEVNAVNIRDYSKDKHKKVDDYPFGGGNGMVMMCQPVIDAYKAISEGMEQKPKVIYMSPQGKVLTQEMAKELSKQEHLILLCGHYEGIDERIIEEIIDEEISIGDYVLTGGELPAMVLIDCVSRLIPGVLSTEGSFSDESHFNGLLEYPQYTRPADYNGNKVPEVLLSGHHANIEKWRMQQSLDRTRDKRPDLFNKLPNKNLL.

Residues Gly-113 and Ile-133 to Leu-138 each bind S-adenosyl-L-methionine.

It belongs to the RNA methyltransferase TrmD family. In terms of assembly, homodimer.

It is found in the cytoplasm. The enzyme catalyses guanosine(37) in tRNA + S-adenosyl-L-methionine = N(1)-methylguanosine(37) in tRNA + S-adenosyl-L-homocysteine + H(+). Its function is as follows. Specifically methylates guanosine-37 in various tRNAs. In Ruminiclostridium cellulolyticum (strain ATCC 35319 / DSM 5812 / JCM 6584 / H10) (Clostridium cellulolyticum), this protein is tRNA (guanine-N(1)-)-methyltransferase.